Consider the following 217-residue polypeptide: 3-demethoxyubiquinol 3-hydroxylase (217 aa).

Fe cation-binding residues include Glu-66, Glu-96, His-99, Glu-148, Glu-180, and His-183.

This sequence belongs to the COQ7 family. The cofactor is Fe cation.

Its subcellular location is the cell membrane. The enzyme catalyses a 5-methoxy-2-methyl-3-(all-trans-polyprenyl)benzene-1,4-diol + AH2 + O2 = a 3-demethylubiquinol + A + H2O. It participates in cofactor biosynthesis; ubiquinone biosynthesis. Catalyzes the hydroxylation of 2-nonaprenyl-3-methyl-6-methoxy-1,4-benzoquinol during ubiquinone biosynthesis. The sequence is that of 3-demethoxyubiquinol 3-hydroxylase from Ralstonia pickettii (strain 12J).